The following is an 855-amino-acid chain: Pre-mRNA-splicing factor SYF1 (855 aa).

HAT repeat units follow at residues 15-47 (LVFE…FKQG), 48-80 (APKP…ARRA), 90-122 (PAYE…FLMD), 124-158 (GRVT…FLRS), 160-192 (PLPE…SSDR), 198-230 (QRLA…LISQ), 235-268 (VQSL…YYIR), 270-305 (GHFE…FEES), and 369-407 (GRPR…FYED). Lys420 is modified (N6-acetyllysine). HAT repeat units follow at residues 498-530 (GTFQ…FLEE), 532-566 (KYFE…KFIS), 571-605 (RKLE…LEEE), 643-677 (YGVT…MECK), and 679-713 (GEID…FEVR). Residues 808–855 (AELAQQANPEEIQLGEDEDEDEMDLEPNEVRLEQQSVPAAVFGSLKED) form a disordered region. A compositionally biased stretch (acidic residues) spans 820-834 (QLGEDEDEDEMDLEP). At Ser851 the chain carries Phosphoserine.

Belongs to the crooked-neck family. In terms of assembly, associates with RNA polymerase II, the TCR-specific proteins CKN1/CSA and ERCC6/CSB, and XPA. Identified in the spliceosome C complex. Component of the XAB2 complex, a multimeric protein complex composed of XAB2, PRPF19, AQR, ZNF830, ISY1, and PPIE. Identified in a pentameric intron-binding (IB) complex composed of AQR, XAB2, ISY1, ZNF830 and PPIE that is incorporated into the spliceosome as a preassembled complex. The IB complex does not contain PRPF19.

The protein resides in the nucleus. Its function is as follows. Involved in pre-mRNA splicing as component of the spliceosome. Involved in transcription-coupled repair (TCR), transcription and pre-mRNA splicing. The chain is Pre-mRNA-splicing factor SYF1 (Xab2) from Mus musculus (Mouse).